The chain runs to 372 residues: Putative glutamate--cysteine ligase 2 (372 aa).

The protein belongs to the glutamate--cysteine ligase type 2 family. YbdK subfamily. Homodimer.

It carries out the reaction L-cysteine + L-glutamate + ATP = gamma-L-glutamyl-L-cysteine + ADP + phosphate + H(+). In terms of biological role, ATP-dependent carboxylate-amine ligase which exhibits weak glutamate--cysteine ligase activity. The polypeptide is Putative glutamate--cysteine ligase 2 (ybdK) (Escherichia coli O17:K52:H18 (strain UMN026 / ExPEC)).